The chain runs to 308 residues: Type II restriction enzyme MamI (308 aa).

It catalyses the reaction Endonucleolytic cleavage of DNA to give specific double-stranded fragments with terminal 5'-phosphates.. In terms of biological role, a P subtype restriction enzyme that recognizes the double-stranded sequence 5'-GATNNNNATC-3' and cleaves after N-5. The sequence is that of Type II restriction enzyme MamI from Microbacterium ammoniaphilum.